A 975-amino-acid chain; its full sequence is Kinesin heavy chain (975 aa).

A Kinesin motor domain is found at Ser12–Val333. Gly92–Thr99 contributes to the ATP binding site. A microtubule-binding region spans residues Val180–Lys321. The stretch at Asn335–Lys931 forms a coiled coil. Residues Val810–Cys891 are necessary for associating with milt. A globular region spans residues His932 to Ser975.

The protein belongs to the TRAFAC class myosin-kinesin ATPase superfamily. Kinesin family. Kinesin subfamily. Oligomer composed of two heavy chains and two light chains.

The protein localises to the cytoplasm. It is found in the cytoskeleton. Kinesin is a microtubule-associated force-producing protein that may play a role in organelle transport. Milt and Miro form an essential protein complex that links Khc to mitochondria for light chain-independent, anterograde transport of mitochondria. This Drosophila melanogaster (Fruit fly) protein is Kinesin heavy chain (Khc).